The primary structure comprises 179 residues: O-acetyl-ADP-ribose deacetylase (179 aa).

A Macro domain is found at 1-175; sequence MTSRLQVIQG…LYARLLTQQG (175 aa). Residues 11 to 12, N25, 33 to 35, and 122 to 126 each bind substrate; these read DI, GVD, and STGVY. D35 serves as the catalytic Proton acceptor.

Belongs to the MacroD-type family. YmdB subfamily. Homodimer. Interacts with RNase III.

The catalysed reaction is 3''-O-acetyl-ADP-D-ribose + H2O = ADP-D-ribose + acetate + H(+). The enzyme catalyses 2''-O-acetyl-ADP-D-ribose + H2O = ADP-D-ribose + acetate + H(+). In terms of biological role, deacetylates O-acetyl-ADP ribose to yield ADP-ribose and free acetate. Down-regulates ribonuclease 3 (RNase III) activity. Acts by interacting directly with the region of the ribonuclease that is required for dimerization/activation. The chain is O-acetyl-ADP-ribose deacetylase from Salmonella gallinarum (strain 287/91 / NCTC 13346).